A 558-amino-acid polypeptide reads, in one-letter code: Laccase-10 (558 aa).

A signal peptide spans 1–22; sequence MVFPIRILVLFALLAFPACVHG. 2 Plastocyanin-like domains span residues 30 to 146 and 157 to 308; these read NVVT…PKLG and EEVI…YSGT. N-linked (GlcNAc...) asparagine glycosylation occurs at Asn76. Cu cation-binding residues include His80 and His82. The N-linked (GlcNAc...) asparagine glycan is linked to Asn112. Cu cation-binding residues include His125 and His127. Asn185, Asn296, Asn323, Asn373, Asn383, Asn400, and Asn441 each carry an N-linked (GlcNAc...) asparagine glycan. Residues 408-542 enclose the Plastocyanin-like 3 domain; the sequence is DFPAKPRRVF…KMAFLVENGK (135 aa). Cu cation is bound by residues His459, His462, His464, His521, Cys522, His523, and His527. Residue Asn545 is glycosylated (N-linked (GlcNAc...) asparagine).

It belongs to the multicopper oxidase family. The cofactor is Cu cation. Ubiquitous, with lower levels in siliques.

The protein localises to the secreted. It is found in the extracellular space. It localises to the apoplast. It carries out the reaction 4 hydroquinone + O2 = 4 benzosemiquinone + 2 H2O. Functionally, lignin degradation and detoxification of lignin-derived products. In Arabidopsis thaliana (Mouse-ear cress), this protein is Laccase-10 (LAC10).